A 431-amino-acid polypeptide reads, in one-letter code: Enolase (431 aa).

Residue glutamine 167 coordinates (2R)-2-phosphoglycerate. The Proton donor role is filled by glutamate 209. The Mg(2+) site is built by aspartate 246, glutamate 289, and aspartate 316. (2R)-2-phosphoglycerate-binding residues include lysine 341, arginine 370, serine 371, and lysine 392. The active-site Proton acceptor is the lysine 341.

This sequence belongs to the enolase family. In terms of assembly, component of the RNA degradosome, a multiprotein complex involved in RNA processing and mRNA degradation. Mg(2+) is required as a cofactor.

It localises to the cytoplasm. It is found in the secreted. The protein localises to the cell surface. It carries out the reaction (2R)-2-phosphoglycerate = phosphoenolpyruvate + H2O. The protein operates within carbohydrate degradation; glycolysis; pyruvate from D-glyceraldehyde 3-phosphate: step 4/5. Functionally, catalyzes the reversible conversion of 2-phosphoglycerate (2-PG) into phosphoenolpyruvate (PEP). It is essential for the degradation of carbohydrates via glycolysis. This chain is Enolase, found in Shewanella putrefaciens (strain CN-32 / ATCC BAA-453).